A 142-amino-acid chain; its full sequence is Cell division protein SepF (142 aa).

The protein belongs to the SepF family. Homodimer. Interacts with FtsZ.

It localises to the cytoplasm. Its function is as follows. Cell division protein that is part of the divisome complex and is recruited early to the Z-ring. Probably stimulates Z-ring formation, perhaps through the cross-linking of FtsZ protofilaments. Its function overlaps with FtsA. This Geobacillus kaustophilus (strain HTA426) protein is Cell division protein SepF.